Here is a 162-residue protein sequence, read N- to C-terminus: Lipoprotein signal peptidase (162 aa).

2 helical membrane passes run 66–86 (PFFI…FRKL) and 92–112 (LAAV…IDRV). Residues Asp-119 and Asp-137 contribute to the active site. Residues 132 to 152 (AFNVADSAICVGVALLALDMI) form a helical membrane-spanning segment.

The protein belongs to the peptidase A8 family.

The protein localises to the cell inner membrane. It catalyses the reaction Release of signal peptides from bacterial membrane prolipoproteins. Hydrolyzes -Xaa-Yaa-Zaa-|-(S,diacylglyceryl)Cys-, in which Xaa is hydrophobic (preferably Leu), and Yaa (Ala or Ser) and Zaa (Gly or Ala) have small, neutral side chains.. Its pathway is protein modification; lipoprotein biosynthesis (signal peptide cleavage). Functionally, this protein specifically catalyzes the removal of signal peptides from prolipoproteins. The protein is Lipoprotein signal peptidase of Geobacter metallireducens (strain ATCC 53774 / DSM 7210 / GS-15).